The sequence spans 227 residues: Zeamatin (227 aa).

An N-terminal signal peptide occupies residues 1–20 (MAGSVAIVGIFVALLAVAGE). Cystine bridges form between cysteine 30/cysteine 226, cysteine 72/cysteine 82, cysteine 87/cysteine 93, cysteine 139/cysteine 215, cysteine 145/cysteine 198, cysteine 153/cysteine 163, cysteine 167/cysteine 176, and cysteine 177/cysteine 185.

Belongs to the thaumatin family.

In terms of biological role, has antifungal activity. Inhibits Candida albicans and Trichoderma reesei; marginal inhibition observed against Alternaria solani and Neurospora crassa. The chain is Zeamatin (Zlp) from Zea mays (Maize).